Here is a 478-residue protein sequence, read N- to C-terminus: Glutamyl-tRNA(Gln) amidotransferase subunit A 2 (478 aa).

Residues K79 and S154 each act as charge relay system in the active site. The active-site Acyl-ester intermediate is the S178.

It belongs to the amidase family. GatA subfamily. As to quaternary structure, heterotrimer of A, B and C subunits.

It catalyses the reaction L-glutamyl-tRNA(Gln) + L-glutamine + ATP + H2O = L-glutaminyl-tRNA(Gln) + L-glutamate + ADP + phosphate + H(+). Its function is as follows. Allows the formation of correctly charged Gln-tRNA(Gln) through the transamidation of misacylated Glu-tRNA(Gln) in organisms which lack glutaminyl-tRNA synthetase. The reaction takes place in the presence of glutamine and ATP through an activated gamma-phospho-Glu-tRNA(Gln). The chain is Glutamyl-tRNA(Gln) amidotransferase subunit A 2 (gatA2) from Clostridium acetobutylicum (strain ATCC 824 / DSM 792 / JCM 1419 / IAM 19013 / LMG 5710 / NBRC 13948 / NRRL B-527 / VKM B-1787 / 2291 / W).